The following is a 152-amino-acid chain: Interleukin-3 (152 aa).

The signal sequence occupies residues 1–19 (MSCLPVLLLLQLLVSPGLQ). N-linked (GlcNAc...) asparagine glycosylation is found at Asn-34 and Asn-89. Cys-35 and Cys-103 are disulfide-bonded.

It belongs to the IL-3 family. Monomer. In terms of tissue distribution, activated T-cells, mast cells, natural killer cells.

The protein resides in the secreted. Functionally, granulocyte/macrophage colony-stimulating factors are cytokines that act in hematopoiesis by controlling the production, differentiation, and function of 2 related white cell populations of the blood, the granulocytes and the monocytes-macrophages. Its function is as follows. This CSF induces granulocytes, macrophages, mast cells, stem cells, erythroid cells, eosinophils and megakaryocytes. This Hylobates lar (Lar gibbon) protein is Interleukin-3 (IL3).